Reading from the N-terminus, the 72-residue chain is Translation initiation factor IF-1 (72 aa).

An S1-like domain is found at 1–72; that stretch reads MAKEDCIEME…TKGRIKFRSK (72 aa).

This sequence belongs to the IF-1 family. As to quaternary structure, component of the 30S ribosomal translation pre-initiation complex which assembles on the 30S ribosome in the order IF-2 and IF-3, IF-1 and N-formylmethionyl-tRNA(fMet); mRNA recruitment can occur at any time during PIC assembly.

The protein localises to the cytoplasm. Its function is as follows. One of the essential components for the initiation of protein synthesis. Stabilizes the binding of IF-2 and IF-3 on the 30S subunit to which N-formylmethionyl-tRNA(fMet) subsequently binds. Helps modulate mRNA selection, yielding the 30S pre-initiation complex (PIC). Upon addition of the 50S ribosomal subunit IF-1, IF-2 and IF-3 are released leaving the mature 70S translation initiation complex. The chain is Translation initiation factor IF-1 from Francisella tularensis subsp. tularensis (strain WY96-3418).